The sequence spans 408 residues: Retron Ec48 reverse transcriptase (408 aa).

In terms of domain architecture, Reverse transcriptase spans 43–269; it reads EELKAIAELP…EPIKVHGLRV (227 aa). Positions 137, 216, and 217 each coordinate Mg(2+).

It belongs to the bacterial reverse transcriptase family.

It carries out the reaction DNA(n) + a 2'-deoxyribonucleoside 5'-triphosphate = DNA(n+1) + diphosphate. Reverse transcriptase (RT) component of antiviral defense system retron Ec48, composed of a non-coding RNA (ncRNA), this reverse transcriptase (RT) and the following membrane protein. Expression of this retron confers protection against bacteriophages lambda, T2, T4, T5 and T7. At multiplicity of infection (MOI) of 0.02 cultures grow normally when infected with lambda without collapsing, at MOI 2 cultures enter growth stasis. At MOI 3 cell membranes are permeabilized within 15 minutes of infection but do not lyse, suggesting the phage are not able to finish a replication cycle. Antiviral defense is suppressed by mutations that knockout the lambda gam expression or phage T7 gp5.9 expression; both viral genes inhibit host RecBCD. The Ec48 retron may sense the integrity of the RecBCD enzyme; when RecBCD is perturbed by viral proteins the Ec48 effector (the membrane protein) is activated, leading to abortive infection and bacterial growth arrest. Responsible for synthesis of msDNA-Ec48 (a branched molecule with RNA linked by a 2',5'-phosphodiester bond to ssDNA). The retron transcript serves as primer (from a conserved internal G residue) and template for the reaction, and codes for the RT. The sequence is that of Retron Ec48 reverse transcriptase from Escherichia coli.